A 1181-amino-acid polypeptide reads, in one-letter code: DNA-directed RNA polymerase subunit beta' (1181 aa).

Zn(2+) is bound by residues Cys-68, Cys-70, Cys-83, and Cys-86. Mg(2+) is bound by residues Asp-457, Asp-459, and Asp-461. Zn(2+)-binding residues include Cys-802, Cys-876, Cys-883, and Cys-886.

The protein belongs to the RNA polymerase beta' chain family. In terms of assembly, the RNAP catalytic core consists of 2 alpha, 1 beta, 1 beta' and 1 omega subunit. When a sigma factor is associated with the core the holoenzyme is formed, which can initiate transcription. Requires Mg(2+) as cofactor. The cofactor is Zn(2+).

The enzyme catalyses RNA(n) + a ribonucleoside 5'-triphosphate = RNA(n+1) + diphosphate. DNA-dependent RNA polymerase catalyzes the transcription of DNA into RNA using the four ribonucleoside triphosphates as substrates. In Syntrophomonas wolfei subsp. wolfei (strain DSM 2245B / Goettingen), this protein is DNA-directed RNA polymerase subunit beta'.